The sequence spans 199 residues: Recombination protein RecR (199 aa).

The C4-type zinc-finger motif lies at 58 to 73 (CSVCTNLTDRDPCRIC). Residues 81 to 176 (AVICVVEEPR…KVTRIAHGLP (96 aa)) form the Toprim domain.

It belongs to the RecR family.

Functionally, may play a role in DNA repair. It seems to be involved in an RecBC-independent recombinational process of DNA repair. It may act with RecF and RecO. The protein is Recombination protein RecR of Heliobacterium modesticaldum (strain ATCC 51547 / Ice1).